A 230-amino-acid chain; its full sequence is Large ribosomal subunit protein uL1 (230 aa).

Belongs to the universal ribosomal protein uL1 family. In terms of assembly, part of the 50S ribosomal subunit.

Its function is as follows. Binds directly to 23S rRNA. The L1 stalk is quite mobile in the ribosome, and is involved in E site tRNA release. In terms of biological role, protein L1 is also a translational repressor protein, it controls the translation of the L11 operon by binding to its mRNA. This is Large ribosomal subunit protein uL1 from Methylobacillus flagellatus (strain ATCC 51484 / DSM 6875 / VKM B-1610 / KT).